A 633-amino-acid chain; its full sequence is FAD-binding monooxygenase andJ (633 aa).

Residues 117 to 120, 129 to 130, and Tyr-135 contribute to the FAD site; these read TWYW and DT. 127-129 contacts NADP(+); the sequence is MCD. NADP(+)-binding positions include 269–275 and 292–293; these read TGASAVQ and RT.

It belongs to the FAD-binding monooxygenase family. It depends on FAD as a cofactor.

Its pathway is secondary metabolite biosynthesis; terpenoid biosynthesis. FAD-binding monooxygenase; part of the gene cluster that mediates the biosynthesis of anditomin, a fungal meroterpenoid. The first step of the pathway is the synthesis of 3,5-dimethylorsellinic acid (DMOA) by the polyketide synthase andM. DMOA is then converted to the phthalide compound 5,7-dihydroxy-4,6-dimethylphthalide (DHDMP) by the cytochrome P450 monooxygenase andK, which is further prenylated by the prenyltransferase andD to yield farnesyl-DHDMP. Further epoxidation by the FAD-dependent monooxygenase andE leads to epoxyfarnesyl-DHDMP. The next step involves the terpene cyclase andB that converts epoxyfarnesyl-DHDMP into preandiloid A through opening of the epoxide ring followed by the cyclization of the farnesyl moiety. Preandiloid A is in turn oxidized at the C-3 hydroxyl group to yield preandiloid B by the dehydrogenase andC. The dioxygenase andA is solely responsible for the dehydrogenation of preandiloid B leading to the enone preandiloid C, as well as for the intriguing structural rearrangement to generate the bicyclo[2.2.2]octane core, transforming preandiloid C into andiconin. FAD-binding monooxygenase andJ then produces andilesin D which is reduced by dehydrogenase andI to yield andilesin A. Action of acetyltransferase andG followed by a spontaneous acetate elimination leads then to andilesin B, which is in turn substrate of the short chain dehydrogenase andH to yield andilesin C. Finally, the dioxygenase andF catalyzes the transformation of andilesin C to anditomin. The sequence is that of FAD-binding monooxygenase andJ from Emericella variicolor (Aspergillus stellatus).